The sequence spans 475 residues: Putative aldehyde dehydrogenase (475 aa).

NAD(+) is bound by residues Trp-146 to Asn-147 and Gly-223 to Ser-224. The active-site Proton acceptor is Glu-245. Residue Leu-246 coordinates NAD(+). Cys-279 (nucleophile) is an active-site residue. Glu-379 lines the NAD(+) pocket.

It belongs to the aldehyde dehydrogenase family.

It catalyses the reaction an aldehyde + NAD(+) + H2O = a carboxylate + NADH + 2 H(+). The sequence is that of Putative aldehyde dehydrogenase from Staphylococcus aureus (strain USA300).